We begin with the raw amino-acid sequence, 94 residues long: Co-chaperonin GroES (94 aa).

Belongs to the GroES chaperonin family. As to quaternary structure, heptamer of 7 subunits arranged in a ring. Interacts with the chaperonin GroEL.

It is found in the cytoplasm. In terms of biological role, together with the chaperonin GroEL, plays an essential role in assisting protein folding. The GroEL-GroES system forms a nano-cage that allows encapsulation of the non-native substrate proteins and provides a physical environment optimized to promote and accelerate protein folding. GroES binds to the apical surface of the GroEL ring, thereby capping the opening of the GroEL channel. In Geobacillus thermodenitrificans (strain NG80-2), this protein is Co-chaperonin GroES.